We begin with the raw amino-acid sequence, 454 residues long: Exodeoxyribonuclease 7 large subunit (454 aa).

Residues 337 to 352 (ANQRQQRASQRLRQQN) are compositionally biased toward low complexity. The segment at 337-359 (ANQRQQRASQRLRQQNPQPRIHR) is disordered.

The protein belongs to the XseA family. In terms of assembly, heterooligomer composed of large and small subunits.

The protein resides in the cytoplasm. It carries out the reaction Exonucleolytic cleavage in either 5'- to 3'- or 3'- to 5'-direction to yield nucleoside 5'-phosphates.. Bidirectionally degrades single-stranded DNA into large acid-insoluble oligonucleotides, which are then degraded further into small acid-soluble oligonucleotides. The protein is Exodeoxyribonuclease 7 large subunit of Salmonella arizonae (strain ATCC BAA-731 / CDC346-86 / RSK2980).